The primary structure comprises 261 residues: Triosephosphate isomerase (261 aa).

10–12 lines the substrate pocket; that stretch reads NWK. The active-site Electrophile is histidine 100. The active-site Proton acceptor is glutamate 172. Substrate is bound by residues glycine 178, serine 218, and 239 to 240; that span reads GG.

The protein belongs to the triosephosphate isomerase family. In terms of assembly, homodimer.

The protein resides in the cytoplasm. The catalysed reaction is D-glyceraldehyde 3-phosphate = dihydroxyacetone phosphate. The protein operates within carbohydrate biosynthesis; gluconeogenesis. It functions in the pathway carbohydrate degradation; glycolysis; D-glyceraldehyde 3-phosphate from glycerone phosphate: step 1/1. In terms of biological role, involved in the gluconeogenesis. Catalyzes stereospecifically the conversion of dihydroxyacetone phosphate (DHAP) to D-glyceraldehyde-3-phosphate (G3P). The protein is Triosephosphate isomerase of Mycolicibacterium vanbaalenii (strain DSM 7251 / JCM 13017 / BCRC 16820 / KCTC 9966 / NRRL B-24157 / PYR-1) (Mycobacterium vanbaalenii).